The sequence spans 279 residues: MDGCHLSRDKLQGDGEGCDLKTSDYLKKYGVRLKKHLGQVFLSDDRIAKRIVKAAELTPEDVVVEIGAGAGTLTEELAKTGARVIAYEIDESLAPILQERLSKYPNVELRFEDFLKAKNVPEGAICVSNIPYNITGPLMEKIIEWKFKRAIVMIQKEVGERILAKPGKKTYGYLSVVVQTFYEVKKLFDVSRSCFVPNPEVDSTVVDLKRKPVDLDFEKFKKFVSMIFAKKRKTLKNNLRPFLSIFEGVDLSRRAEQLTVEEIVELYEKWRRALECSRG.

5 residues coordinate S-adenosyl-L-methionine: Leu-42, Gly-67, Glu-88, Asp-113, and Asn-129.

The protein belongs to the class I-like SAM-binding methyltransferase superfamily. rRNA adenine N(6)-methyltransferase family. RsmA subfamily.

It is found in the cytoplasm. The catalysed reaction is adenosine(1518)/adenosine(1519) in 16S rRNA + 4 S-adenosyl-L-methionine = N(6)-dimethyladenosine(1518)/N(6)-dimethyladenosine(1519) in 16S rRNA + 4 S-adenosyl-L-homocysteine + 4 H(+). Functionally, specifically dimethylates two adjacent adenosines (A1518 and A1519) in the loop of a conserved hairpin near the 3'-end of 16S rRNA in the 30S particle. May play a critical role in biogenesis of 30S subunits. The sequence is that of Ribosomal RNA small subunit methyltransferase A from Thermotoga maritima (strain ATCC 43589 / DSM 3109 / JCM 10099 / NBRC 100826 / MSB8).